The sequence spans 227 residues: Isopentenyl-diphosphate Delta-isomerase 1 (227 aa).

A substrate-binding site is contributed by K36. H40 and H51 together coordinate Mg(2+). Residues 49 to 199 (LLHRAFSVFL…EIKITPWFKI (151 aa)) enclose the Nudix hydrolase domain. Substrate is bound by residues R70 and K74. The active site involves C86. S87 serves as a coordination point for substrate. Mg(2+)-binding residues include E146 and E148. E148 is a catalytic residue. The residue at position 176 (K176) is an N6-acetyllysine. The Microbody targeting signal signature appears at 225–227 (YRM).

The protein belongs to the IPP isomerase type 1 family. As to quaternary structure, monomer. Mg(2+) is required as a cofactor.

The protein resides in the peroxisome. It catalyses the reaction isopentenyl diphosphate = dimethylallyl diphosphate. It participates in isoprenoid biosynthesis; dimethylallyl diphosphate biosynthesis; dimethylallyl diphosphate from isopentenyl diphosphate: step 1/1. Its function is as follows. Catalyzes the 1,3-allylic rearrangement of the homoallylic substrate isopentenyl (IPP) to its highly electrophilic allylic isomer, dimethylallyl diphosphate (DMAPP). This is Isopentenyl-diphosphate Delta-isomerase 1 (IDI1) from Homo sapiens (Human).